Here is an 80-residue protein sequence, read N- to C-terminus: Acyl carrier protein (80 aa).

The Carrier domain occupies 4–79; sequence EAILEKVRSI…DAVKYIEDKQ (76 aa). O-(pantetheine 4'-phosphoryl)serine is present on serine 39.

The protein belongs to the acyl carrier protein (ACP) family. 4'-phosphopantetheine is transferred from CoA to a specific serine of apo-ACP by AcpS. This modification is essential for activity because fatty acids are bound in thioester linkage to the sulfhydryl of the prosthetic group.

Its subcellular location is the cytoplasm. It functions in the pathway lipid metabolism; fatty acid biosynthesis. Its function is as follows. Carrier of the growing fatty acid chain in fatty acid biosynthesis. The sequence is that of Acyl carrier protein from Synechococcus sp. (strain CC9902).